A 424-amino-acid polypeptide reads, in one-letter code: MSRRSGRLQSRQDNQPLTECISDENNLPMCTRKRKTREQDTTGVSKAEEVQRRRQQFTIENRWVPISESSSIETSLLVPMQTKEPSTPSEELMDTANWVTFRNLFPAHVSDRASPIPLLHWDDLPEVWTIMTRKEALCPRKHDCLKSHPSLGERMRAILLDWLIEVCEVYRLHRESFYLAADFVDRYLAAKENVPKTKLQLIGITSLFVAAKLEEIYPPKLHEFAYVTDGACTDDQILDQELIMLMTLNWDLTPITVNTWLNAFMQICNAEEIANRKTNFHFPSYSSTEFVQVAQLLDVCTLDIGSMDFDYSILAASALYHVTNEEVTLSVTGLKWDDIAACVQWMSTFAMTIREVGVAQLKNFKNIYAGDAHNIQTHCSSLELLDKSHEKQRLLREASCCSPVQVPGVLTPPQSDKKSKKGVL.

The interval 1-25 is disordered; that stretch reads MSRRSGRLQSRQDNQPLTECISDEN. Positions 7–17 are enriched in polar residues; the sequence is RLQSRQDNQPL. Threonine 411 bears the Phosphothreonine mark.

It belongs to the cyclin family. Cyclin E subfamily. Interacts with a member of the CDK2/CDK protein kinases to form a serine/threonine kinase holoenzyme complex. The cyclin subunit imparts substrate specificity to the complex.

The protein resides in the nucleus. Essential for the control of the cell cycle at the G1/S (start) transition. The protein is G1/S-specific cyclin-E (CYCE) of Hemicentrotus pulcherrimus (Sea urchin).